Consider the following 1496-residue polypeptide: Carbamoyl-phosphate synthase [ammonia], mitochondrial (1496 aa).

The N-terminal 33 residues, 1–33 (MTRILSVFKTAKTGVLNAAAHRYRGFSKAGVRL), are a transit peptide targeting the mitochondrion. The anthranilate phosphoribosyltransferase homolog stretch occupies residues 34 to 214 (MSVKAQTANL…TKVFGKGNPV (181 aa)). One can recognise a Glutamine amidotransferase type-1 domain in the interval 215–401 (RIVAVDCGVK…MSLIKKGKGT (187 aa)). C290 functions as the For GATase activity in the catalytic mechanism. 2 consecutive ATP-grasp domains span residues 548-740 (SDKL…KIAL) and 1090-1281 (SAVL…KVMI). Residues 1352-1496 (FKLPQKGILI…YRQFGGAKPS (145 aa)) enclose the MGS-like domain. N-acetyl-L-glutamate is bound by residues T1388, T1391, W1407, N1433, N1436, and N1445.

The protein resides in the mitochondrion. It carries out the reaction hydrogencarbonate + NH4(+) + 2 ATP = carbamoyl phosphate + 2 ADP + phosphate + 2 H(+). Requires N-acetyl-L-glutamate (NAG) as an allosteric activator. Involved in the urea cycle of ureotelic animals where the enzyme plays an important role in removing excess ammonia from the cell. This Aquarana catesbeiana (American bullfrog) protein is Carbamoyl-phosphate synthase [ammonia], mitochondrial.